Reading from the N-terminus, the 256-residue chain is Geranylgeranylglyceryl phosphate synthase (256 aa).

2 residues coordinate Mg(2+): aspartate 28 and serine 53. Sn-glycerol 1-phosphate contacts are provided by residues 172–178 (YLEAGSG), 203–204 (GG), and 225–226 (GT).

This sequence belongs to the GGGP/HepGP synthase family. Group II subfamily. Requires Mg(2+) as cofactor.

The protein resides in the cytoplasm. The enzyme catalyses sn-glycerol 1-phosphate + (2E,6E,10E)-geranylgeranyl diphosphate = sn-3-O-(geranylgeranyl)glycerol 1-phosphate + diphosphate. The protein operates within membrane lipid metabolism; glycerophospholipid metabolism. Functionally, prenyltransferase that catalyzes the transfer of the geranylgeranyl moiety of geranylgeranyl diphosphate (GGPP) to the C3 hydroxyl of sn-glycerol-1-phosphate (G1P). This reaction is the first ether-bond-formation step in the biosynthesis of archaeal membrane lipids. The sequence is that of Geranylgeranylglyceryl phosphate synthase from Methanococcus maripaludis (strain C6 / ATCC BAA-1332).